Here is a 269-residue protein sequence, read N- to C-terminus: tRNA-cytidine(32) 2-sulfurtransferase (269 aa).

The short motif at 53-58 is the PP-loop motif element; the sequence is SGGKDS. 3 residues coordinate [4Fe-4S] cluster: Cys-128, Cys-131, and Cys-218.

The protein belongs to the TtcA family. In terms of assembly, homodimer. Mg(2+) is required as a cofactor. Requires [4Fe-4S] cluster as cofactor.

Its subcellular location is the cytoplasm. It catalyses the reaction cytidine(32) in tRNA + S-sulfanyl-L-cysteinyl-[cysteine desulfurase] + AH2 + ATP = 2-thiocytidine(32) in tRNA + L-cysteinyl-[cysteine desulfurase] + A + AMP + diphosphate + H(+). It functions in the pathway tRNA modification. Catalyzes the ATP-dependent 2-thiolation of cytidine in position 32 of tRNA, to form 2-thiocytidine (s(2)C32). The sulfur atoms are provided by the cysteine/cysteine desulfurase (IscS) system. The sequence is that of tRNA-cytidine(32) 2-sulfurtransferase from Pelobacter propionicus (strain DSM 2379 / NBRC 103807 / OttBd1).